We begin with the raw amino-acid sequence, 474 residues long: Neuronal acetylcholine receptor subunit eat-2 (474 aa).

The signal sequence occupies residues Met1 to Ser21. At Ser22–Tyr237 the chain is on the extracellular side. An N-linked (GlcNAc...) asparagine glycan is attached at Asn95. Cysteines 149 and 163 form a disulfide. 3 consecutive transmembrane segments (helical) span residues Gly238–Met258, Ile266–Val286, and Leu303–Phe323. Residues Arg324 to Arg440 lie on the Cytoplasmic side of the membrane. Residues Pro359–Leu378 are disordered. Residues Leu441 to Cys461 form a helical membrane-spanning segment.

It belongs to the ligand-gated ion channel (TC 1.A.9) family. Acetylcholine receptor (TC 1.A.9.1) subfamily. In terms of assembly, neuronal AChR seems to be composed of two different type of subunits: alpha and beta. As to expression, expressed in pharyngeal muscle.

The protein localises to the postsynaptic cell membrane. The protein resides in the cell membrane. After binding acetylcholine, the AChR responds by an extensive change in conformation that affects all subunits and leads to opening of an ion-conducting channel across the plasma membrane. Nicotinic acetylcholine receptor in the MC pharyngeal motor neuron involved in pharyngeal pumping. Has a role in the determination of life span possibly via calorific restriction which affects growth rate, although this is independent of metabolic activity. Plays a role in the defense against the accumulation of ingested live pathogenic bacteria in the intestine. In Caenorhabditis elegans, this protein is Neuronal acetylcholine receptor subunit eat-2.